The primary structure comprises 316 residues: Transaldolase (316 aa).

The active-site Schiff-base intermediate with substrate is lysine 131.

It belongs to the transaldolase family. Type 1 subfamily. In terms of assembly, homodimer.

The protein localises to the cytoplasm. It catalyses the reaction D-sedoheptulose 7-phosphate + D-glyceraldehyde 3-phosphate = D-erythrose 4-phosphate + beta-D-fructose 6-phosphate. It participates in carbohydrate degradation; pentose phosphate pathway; D-glyceraldehyde 3-phosphate and beta-D-fructose 6-phosphate from D-ribose 5-phosphate and D-xylulose 5-phosphate (non-oxidative stage): step 2/3. Functionally, transaldolase is important for the balance of metabolites in the pentose-phosphate pathway. The protein is Transaldolase of Sodalis glossinidius (strain morsitans).